The following is a 248-amino-acid chain: Ubiquinone biosynthesis O-methyltransferase (248 aa).

R41, G72, D93, and M136 together coordinate S-adenosyl-L-methionine.

The protein belongs to the methyltransferase superfamily. UbiG/COQ3 family.

It carries out the reaction a 3-demethylubiquinol + S-adenosyl-L-methionine = a ubiquinol + S-adenosyl-L-homocysteine + H(+). The enzyme catalyses a 3-(all-trans-polyprenyl)benzene-1,2-diol + S-adenosyl-L-methionine = a 2-methoxy-6-(all-trans-polyprenyl)phenol + S-adenosyl-L-homocysteine + H(+). The protein operates within cofactor biosynthesis; ubiquinone biosynthesis. Its function is as follows. O-methyltransferase that catalyzes the 2 O-methylation steps in the ubiquinone biosynthetic pathway. The sequence is that of Ubiquinone biosynthesis O-methyltransferase from Brucella anthropi (strain ATCC 49188 / DSM 6882 / CCUG 24695 / JCM 21032 / LMG 3331 / NBRC 15819 / NCTC 12168 / Alc 37) (Ochrobactrum anthropi).